Here is a 2543-residue protein sequence, read N- to C-terminus: Polyketide synthase PksR (2543 aa).

A methyltransferase region spans residues 165-269 (LEIGAGTGGT…KAVLKKNGLL (105 aa)). The Carrier 1 domain maps to 376-452 (SLIEQTAQFV…ELVEYLVKGH (77 aa)). Position 413 is an O-(pantetheine 4'-phosphoryl)serine (Ser-413). The disordered stretch occupies residues 465–485 (TKPAKNEAPLQTERTDPNKPF). The region spanning 527-959 (TEDIAIIGVS…GAYANLIIEE (433 aa)) is the Ketosynthase family 3 (KS3) 1 domain. Residue Cys-700 is the For beta-ketoacyl synthase 1 activity of the active site. An N-terminal hotdog fold region spans residues 1114 to 1242 (HFDVSSINEK…GQCGIGSFEP (129 aa)). A PKS/mFAS DH domain is found at 1114 to 1397 (HFDVSSINEK…LKQLRISNQR (284 aa)). Residues 1255 to 1397 (TKLHHIDQMY…LKQLRISNQR (143 aa)) are C-terminal hotdog fold. One can recognise a Carrier 2 domain in the interval 1407–1485 (SNLKARIRSY…ELIDFFADKH (79 aa)). Ser-1445 carries the post-translational modification O-(pantetheine 4'-phosphoryl)serine. The 419-residue stretch at 1528–1946 (ADGIAIIGMS…GVNAHVILEE (419 aa)) folds into the Ketosynthase family 3 (KS3) 2 domain. Active-site for beta-ketoacyl synthase 2 activity residues include Cys-1680, His-1815, and His-1862. The region spanning 2134-2208 (RINNSSDHHI…DMMDLIAKKQ (75 aa)) is the Carrier 3 domain. Residue Ser-2168 is modified to O-(pantetheine 4'-phosphoryl)serine. The segment at 2234-2514 (RPVFWFHGGV…EFCEKLYSNR (281 aa)) is thioesterase.

It depends on pantetheine 4'-phosphate as a cofactor.

The protein localises to the cytoplasm. The protein operates within antibiotic biosynthesis; bacillaene biosynthesis. Its function is as follows. Involved in some intermediate steps for the synthesis of the antibiotic polyketide bacillaene which is involved in secondary metabolism. This is Polyketide synthase PksR (pksR) from Bacillus subtilis (strain 168).